A 494-amino-acid chain; its full sequence is GTPase Der (494 aa).

EngA-type G domains lie at 3 to 166 and 208 to 381; these read PVVA…VGEK and IKLA…ECAT. Residues 9 to 16, 56 to 60, 118 to 121, 214 to 221, 261 to 265, and 326 to 329 contribute to the GTP site; these read GRPNVGKS, DTGGI, NKTD, DTAGV, and NKWD. The 85-residue stretch at 382–466 folds into the KH-like domain; the sequence is RRVNTSMLTK…PIRIQFKEGE (85 aa).

It belongs to the TRAFAC class TrmE-Era-EngA-EngB-Septin-like GTPase superfamily. EngA (Der) GTPase family. Associates with the 50S ribosomal subunit.

GTPase that plays an essential role in the late steps of ribosome biogenesis. In Serratia proteamaculans (strain 568), this protein is GTPase Der.